A 229-amino-acid polypeptide reads, in one-letter code: Potassium/proton antiporter CemA (229 aa).

3 consecutive transmembrane segments (helical) span residues 7 to 27, 107 to 127, and 189 to 209; these read FTPL…SLSF, ILHF…SLLG, and IISG…KYWI.

Belongs to the CemA family.

Its subcellular location is the plastid. It localises to the chloroplast inner membrane. It catalyses the reaction K(+)(in) + H(+)(out) = K(+)(out) + H(+)(in). Its function is as follows. Contributes to K(+)/H(+) antiport activity by supporting proton efflux to control proton extrusion and homeostasis in chloroplasts in a light-dependent manner to modulate photosynthesis. Prevents excessive induction of non-photochemical quenching (NPQ) under continuous-light conditions. Indirectly promotes efficient inorganic carbon uptake into chloroplasts. In Lactuca sativa (Garden lettuce), this protein is Potassium/proton antiporter CemA.